The primary structure comprises 328 residues: MIVVGIDHGTSGITSCIMENGLIKSIFKIRRTEFEKLSFLDELKKHINLSEIDLIGVCYSMGDGINKITDISRVKNRGVRNLEGIGKKIGGGTKVYDEIKESKIPAVVIPGLHKGIDCMDKRFNALFSHTASPEKISICYNAYKTFNLENFILSDISSNTVTLLIRNGKIFGGFDACIGAVGILHGPIDLELIKKIDLREITANEAFSKAGAVKITDSYKGVEDTKSEIIEKYEKDEKCKLAVDSLVLSVSMEINSLMFLNPENNVVIAGSVGVCKNPDISKMIKENTNGNFFVLDGESGAIGSAMIANDILYGKKDILGISVDFNIE.

The protein belongs to the UPF0285 family.

The chain is UPF0285 protein Mevan_1551 from Methanococcus vannielii (strain ATCC 35089 / DSM 1224 / JCM 13029 / OCM 148 / SB).